The primary structure comprises 152 residues: Pseudo histidine-containing phosphotransfer protein 5 (152 aa).

The region spanning 38–140 (NPNFAEEVVS…ESYFQLLRQA (103 aa)) is the HPt domain.

Functionally, functions as a two-component phosphorelay mediator between cytokinin sensor histidine kinases and response regulators (B-type ARRs). Plays an important role in propagating cytokinin signal transduction. The protein is Pseudo histidine-containing phosphotransfer protein 5 of Oryza sativa subsp. japonica (Rice).